A 299-amino-acid polypeptide reads, in one-letter code: Quinolinate synthase (299 aa).

His21 and Ser38 together coordinate iminosuccinate. Cys83 serves as a coordination point for [4Fe-4S] cluster. Iminosuccinate-binding positions include 109–111 and Ser126; that span reads YVN. Cys170 provides a ligand contact to [4Fe-4S] cluster. Iminosuccinate is bound by residues 196-198 and Thr213; that span reads HPE. Cys256 contributes to the [4Fe-4S] cluster binding site.

The protein belongs to the quinolinate synthase family. Type 2 subfamily. [4Fe-4S] cluster serves as cofactor.

It is found in the cytoplasm. The catalysed reaction is iminosuccinate + dihydroxyacetone phosphate = quinolinate + phosphate + 2 H2O + H(+). It participates in cofactor biosynthesis; NAD(+) biosynthesis; quinolinate from iminoaspartate: step 1/1. Its function is as follows. Catalyzes the condensation of iminoaspartate with dihydroxyacetone phosphate to form quinolinate. This chain is Quinolinate synthase, found in Pyrococcus abyssi (strain GE5 / Orsay).